Consider the following 294-residue polypeptide: Survival motor neuron protein (294 aa).

Gly residues predominate over residues 1–12 (MAMSSGGSGGGV). Positions 1-32 (MAMSSGGSGGGVPEQEDSVLFRRGTGQSDDSD) are disordered. The residue at position 2 (alanine 2) is an N-acetylalanine. Residues serine 4, serine 5, and serine 8 each carry the phosphoserine; by PKA modification. The tract at residues 13 to 44 (PEQEDSVLFRRGTGQSDDSDIWDDTALIKAYD) is P1 (binding site for GEMIN2). Threonine 25 is subject to Phosphothreonine. 2 positions are modified to phosphoserine: serine 28 and serine 31. A Glycyl lysine isopeptide (Lys-Gly) (interchain with G-Cter in SUMO2) cross-link involves residue lysine 51. The interval 58–88 (DICETSGKPKTTPKRKPAKKNKSQKKNTAAP) is disordered. Basic residues predominate over residues 68–82 (TTPKRKPAKKNKSQK). Phosphothreonine is present on threonine 69. A Phosphothreonine; by PKA modification is found at threonine 85. The region spanning 91 to 151 (QWKVGDKCSA…LSPISEVANN (61 aa)) is the Tudor domain. A required for interaction with RPP20/POP7 region spans residues 97–209 (KCSAIWSEDG…MPGPRLGPGK (113 aa)). Positions 156-166 (AQENENESQVS) are enriched in low complexity. A disordered region spans residues 156–222 (AQENENESQV…KFNGPPPPPP (67 aa)). Phosphoserine; by PKA is present on serine 187. Residues 194–204 (LPPPPPMPGPR) are compositionally biased toward pro residues. Residue lysine 209 forms a Glycyl lysine isopeptide (Lys-Gly) (interchain with G-Cter in SUMO2) linkage. The tract at residues 240–267 (PPIIPPPPPICPDSLDDADALGSMLISW) is P2 (binding site for SM B). Residues 279–294 (GFRQNQKEGRCSHSLN) are required for interaction with SYNCRIP.

This sequence belongs to the SMN family. In terms of assembly, homooligomer; may form higher order homooligomers in the dimer to octamer range. Part of the core SMN complex that contains SMN1, GEMIN2/SIP1, DDX20/GEMIN3, GEMIN4, GEMIN5, GEMIN6, GEMIN7, GEMIN8 and STRAP/UNRIP. Part of the SMN-Sm complex that contains SMN1, GEMIN2/SIP1, DDX20/GEMIN3, GEMIN4, GEMIN5, GEMIN6, GEMIN7, GEMIN8, STRAP/UNRIP and the Sm proteins SNRPB, SNRPD1, SNRPD2, SNRPD3, SNRPE, SNRPF and SNRPG. Component of an import snRNP complex composed of KPNB1, RNUT1, SMN1 and ZNF259. Interacts with DDX20, FBL, NOLA1, RNUT1, SYNCRIP and with several spliceosomal snRNP core Sm proteins, including SNRPB, SNRPD1, SNRPD2, SNRPD3, SNRPE and ILF3. Interacts with GEMIN2; the interaction is direct. Interacts with GEMIN3; the interaction is direct. Interacts with GEMIN8; the interaction is direct. Interacts with SNRPB; the interaction is direct. Interacts (via Tudor domain) with SNRPD1 (via C-terminus); the interaction is direct. Interacts with SNRPD2; the interaction is direct. Interacts (via Tudor domain) with SNRPD3 (via C-terminus); the interaction is direct. Interacts with SNRPE; the interaction is direct. Interacts with OSTF1, LSM10, LSM11 and RPP20/POP7. Interacts (via C-terminal region) with ZPR1 (via C-terminal region). Interacts (via Tudor domain) with COIL. Interacts with SETX; recruits SETX to POLR2A. Interacts with POLR2A (via the C-terminal domain (CTD)). Interacts with PRMT5. Interacts with XRN2. Interacts (via C-terminus) with FMR1 (via C-terminus); the interaction is direct and occurs in a RNA-independent manner. Interacts (via Tudor domain) with SF3B2 ('Arg-508'-methylated form). Interacts with WRAP53/TCAB1. Interacts (via Tudor domain) with ELAVL4 in an RNA-independent manner; the interaction is required for localization of ELAVL4 to RNA granules. Interacts with FRG1.

The protein resides in the nucleus. The protein localises to the gem. Its subcellular location is the cajal body. It localises to the cytoplasm. It is found in the cytoplasmic granule. The protein resides in the perikaryon. The protein localises to the cell projection. Its subcellular location is the neuron projection. It localises to the axon. It is found in the myofibril. The protein resides in the sarcomere. The protein localises to the z line. Functionally, the SMN complex catalyzes the assembly of small nuclear ribonucleoproteins (snRNPs), the building blocks of the spliceosome, and thereby plays an important role in the splicing of cellular pre-mRNAs. Most spliceosomal snRNPs contain a common set of Sm proteins SNRPB, SNRPD1, SNRPD2, SNRPD3, SNRPE, SNRPF and SNRPG that assemble in a heptameric protein ring on the Sm site of the small nuclear RNA to form the core snRNP (Sm core). In the cytosol, the Sm proteins SNRPD1, SNRPD2, SNRPE, SNRPF and SNRPG are trapped in an inactive 6S pICln-Sm complex by the chaperone CLNS1A that controls the assembly of the core snRNP. To assemble core snRNPs, the SMN complex accepts the trapped 5Sm proteins from CLNS1A forming an intermediate. Binding of snRNA inside 5Sm ultimately triggers eviction of the SMN complex, thereby allowing binding of SNRPD3 and SNRPB to complete assembly of the core snRNP. Within the SMN complex, SMN1 acts as a structural backbone and together with GEMIN2 it gathers the Sm complex subunits. Ensures the correct splicing of U12 intron-containing genes that may be important for normal motor and proprioceptive neurons development. Also required for resolving RNA-DNA hybrids created by RNA polymerase II, that form R-loop in transcription terminal regions, an important step in proper transcription termination. May also play a role in the metabolism of small nucleolar ribonucleoprotein (snoRNPs). The protein is Survival motor neuron protein (SMN1) of Macaca fascicularis (Crab-eating macaque).